The chain runs to 335 residues: Protein BIG1 (335 aa).

The N-terminal stretch at 1–17 (MQTVLKYLLLIMCGSFC) is a signal peptide. Residues 20–275 (EELQNQTNVP…FDSQLIENNR (256 aa)) lie on the Lumenal side of the membrane. 2 N-linked (GlcNAc...) asparagine glycosylation sites follow: Asn-24 and Asn-144. A helical transmembrane segment spans residues 276-296 (GLLQLIFTILVGYILIQFFFT). Topologically, residues 297 to 335 (KKTIVDEKITNKKDNVKQTSPQLLKKVQEIQKKPSQQVS) are cytoplasmic.

This sequence belongs to the BIG1 family. Post-translationally, N-glycosylated.

It is found in the endoplasmic reticulum membrane. In terms of biological role, required for normal beta-1,6-glucan synthesis. In Saccharomyces cerevisiae (strain ATCC 204508 / S288c) (Baker's yeast), this protein is Protein BIG1 (BIG1).